The sequence spans 83 residues: Translation initiation factor IF-1 (83 aa).

One can recognise an S1-like domain in the interval 1–72 (MAKEELIEMQ…SKGRITFRHL (72 aa)).

It belongs to the IF-1 family. As to quaternary structure, component of the 30S ribosomal translation pre-initiation complex which assembles on the 30S ribosome in the order IF-2 and IF-3, IF-1 and N-formylmethionyl-tRNA(fMet); mRNA recruitment can occur at any time during PIC assembly.

The protein localises to the cytoplasm. One of the essential components for the initiation of protein synthesis. Stabilizes the binding of IF-2 and IF-3 on the 30S subunit to which N-formylmethionyl-tRNA(fMet) subsequently binds. Helps modulate mRNA selection, yielding the 30S pre-initiation complex (PIC). Upon addition of the 50S ribosomal subunit IF-1, IF-2 and IF-3 are released leaving the mature 70S translation initiation complex. The protein is Translation initiation factor IF-1 of Verminephrobacter eiseniae (strain EF01-2).